A 267-amino-acid chain; its full sequence is L-aspartate dehydrogenase (267 aa).

NAD(+) contacts are provided by alanine 124 and asparagine 190. Residue histidine 220 is part of the active site.

Belongs to the L-aspartate dehydrogenase family.

The catalysed reaction is L-aspartate + NADP(+) + H2O = oxaloacetate + NH4(+) + NADPH + H(+). It carries out the reaction L-aspartate + NAD(+) + H2O = oxaloacetate + NH4(+) + NADH + H(+). It participates in cofactor biosynthesis; NAD(+) biosynthesis; iminoaspartate from L-aspartate (dehydrogenase route): step 1/1. In terms of biological role, specifically catalyzes the NAD or NADP-dependent dehydrogenation of L-aspartate to iminoaspartate. This is L-aspartate dehydrogenase from Polaromonas sp. (strain JS666 / ATCC BAA-500).